Reading from the N-terminus, the 110-residue chain is Iron-sulfur cluster assembly protein CyaY (110 aa).

It belongs to the frataxin family.

Involved in iron-sulfur (Fe-S) cluster assembly. May act as a regulator of Fe-S biogenesis. The chain is Iron-sulfur cluster assembly protein CyaY from Stutzerimonas stutzeri (strain A1501) (Pseudomonas stutzeri).